Consider the following 433-residue polypeptide: Protein translocase subunit SecY (433 aa).

10 consecutive transmembrane segments (helical) span residues 17 to 37 (IIFT…PIPG), 71 to 91 (IFAL…LMSV), 117 to 137 (LTVL…ESMV), 141 to 161 (GPVV…TLVV), 184 to 204 (LIIF…MFEL), 212 to 232 (PLIA…IIFF), 268 to 288 (GVIP…LANF), 310 to 330 (YILL…AIVF), 366 to 386 (LTVI…LLMN), and 388 to 408 (YVIS…VVLD).

It belongs to the SecY/SEC61-alpha family. Component of the Sec protein translocase complex. Heterotrimer consisting of SecY, SecE and SecG subunits. The heterotrimers can form oligomers, although 1 heterotrimer is thought to be able to translocate proteins. Interacts with the ribosome. Interacts with SecDF, and other proteins may be involved. Interacts with SecA.

It is found in the cell inner membrane. Its function is as follows. The central subunit of the protein translocation channel SecYEG. Consists of two halves formed by TMs 1-5 and 6-10. These two domains form a lateral gate at the front which open onto the bilayer between TMs 2 and 7, and are clamped together by SecE at the back. The channel is closed by both a pore ring composed of hydrophobic SecY resides and a short helix (helix 2A) on the extracellular side of the membrane which forms a plug. The plug probably moves laterally to allow the channel to open. The ring and the pore may move independently. The sequence is that of Protein translocase subunit SecY from Rickettsia typhi (strain ATCC VR-144 / Wilmington).